Consider the following 260-residue polypeptide: HTH-type transcriptional repressor NanR (260 aa).

In terms of domain architecture, HTH gntR-type spans 27 to 95 (KKLSEMVEEE…NGERARVSRP (69 aa)). A DNA-binding region (H-T-H motif) is located at residues 55-74 (ERELMAFFNVGRPSVREALA).

Belongs to the NanR family.

In terms of biological role, transcriptional repressor that controls expression of the genes required for the catabolism of sialic acids. This is HTH-type transcriptional repressor NanR from Citrobacter rodentium (strain ICC168) (Citrobacter freundii biotype 4280).